The following is a 294-amino-acid chain: Non-selective voltage-gated ion channel VDAC2 (294 aa).

An N-acetylalanine modification is found at alanine 2. 2 residues coordinate ATP: lysine 23 and lysine 31. The residue at position 31 (lysine 31) is an N6-acetyllysine; alternate. Lysine 31 is subject to N6-succinyllysine; alternate. Residue lysine 31 forms a Glycyl lysine isopeptide (Lys-Gly) (interchain with G-Cter in ubiquitin); alternate linkage. The next 2 beta stranded transmembrane spans lie at 37–46 (LVKLDVKTKS) and 50–58 (VEFSTSGSS). Residue lysine 64 forms a Glycyl lysine isopeptide (Lys-Gly) (interchain with G-Cter in ubiquitin) linkage. Residues 65–75 (VTGTLETKYKW) form a beta stranded membrane-spanning segment. Tyrosine 78 is modified (phosphotyrosine). 3 beta stranded membrane-spanning segments follow: residues 80–87 (LTFTEKWN), 91–100 (TLGTEIAIED), and 106–115 (LKLTFDTTFS). Threonine 118 is modified (phosphothreonine). At lysine 120 the chain carries N6-acetyllysine; alternate. Lysine 120 participates in a covalent cross-link: Glycyl lysine isopeptide (Lys-Gly) (interchain with G-Cter in ubiquitin); alternate. Residue lysine 121 forms a Glycyl lysine isopeptide (Lys-Gly) (interchain with G-Cter in ubiquitin) linkage. 4 beta stranded membrane passes run 122–131 (SGKIKSSYKR), 134–141 (INLGCDVD), 148–156 (AIHGSAVFG), and 161–169 (LAGYQMTFD). Residue lysine 172 forms a Glycyl lysine isopeptide (Lys-Gly) (interchain with G-Cter in ubiquitin) linkage. Beta stranded transmembrane passes span 174 to 186 (KLTR…GYRT), 189 to 196 (FQLHTNVN), 200 to 209 (EFGGSIYQKV), 213 to 222 (LDTSVNLAWT), 229 to 238 (RFGIAAKYQL), and 242 to 249 (ASISAKVN). At serine 251 the chain carries Phosphoserine. Residues 253–255 (LIG) and 271–275 (SALVD) each bind NAD(+). 2 beta stranded membrane passes run 253–262 (LIGVGYTQTL) and 265–274 (GVKLTLSALV). Lysine 277 carries the N6-acetyllysine; alternate modification. A Glycyl lysine isopeptide (Lys-Gly) (interchain with G-Cter in ubiquitin); alternate cross-link involves residue lysine 277. Residues 284–293 (HKLGLALELE) traverse the membrane as a beta stranded segment.

The protein belongs to the eukaryotic mitochondrial porin family. Monomer, homodimer and higher order oligomers; formation of higher order structures is necessary for scramblase activity. Interacts with ARMC12 in a TBC1D21-dependent manner. Interacts with KLC3. Interacts with SPATA33. Interacts with PPP3CC in a SPATA33-dependent manner. Ubiquitinated by PRKN during mitophagy, leading to its degradation and enhancement of mitophagy. Deubiquitinated by USP30.

It localises to the mitochondrion outer membrane. It is found in the membrane. The enzyme catalyses chloride(in) = chloride(out). The catalysed reaction is K(+)(in) = K(+)(out). It catalyses the reaction a 1,2-diacyl-sn-glycero-3-phospho-L-serine(in) = a 1,2-diacyl-sn-glycero-3-phospho-L-serine(out). It carries out the reaction a 1,2-diacyl-sn-glycero-3-phosphocholine(in) = a 1,2-diacyl-sn-glycero-3-phosphocholine(out). The enzyme catalyses a 1,2-diacyl-sn-glycero-3-phospho-(1D-myo-inositol)(in) = a 1,2-diacyl-sn-glycero-3-phospho-(1D-myo-inositol)(out). Non-selective voltage-gated ion channel that mediates the transport of anions and cations through the mitochondrion outer membrane and plasma membrane. The channel adopts an open conformation at zero mV and a closed conformation at both positive and negative potentials. There are two populations of channels; the main that functions in a lower open-state conductance with lower ion selectivity, that switch, in a voltage-dependent manner, from the open to a low-conducting 'closed' state and the other that has a normal ion selectivity in the typical high conductance, 'open' state. Binds various lipids, including the sphingolipid ceramide, the phospholipid phosphatidylcholine, and the sterols cholesterol and oxysterol. Binding of ceramide promotes the mitochondrial outer membrane permeabilization (MOMP) apoptotic pathway. Its function is as follows. Catalyzes the scrambling of phospholipids across the outer mitochondrial membrane; the mechanism is unrelated to channel activity and is capable of translocating both anionic and zwitterionic phospholipids. This is Non-selective voltage-gated ion channel VDAC2 from Bos taurus (Bovine).